Consider the following 412-residue polypeptide: MDELLLQDPEVGKAIILEIERQTGKLELIASENFVSAAVRQAQGSVLTHKYAEGYPGKRYYGGCEFVDIAENIAIERARTIFGCEYANVQPHSGSQANMGVYFACLKPGDTILGMNLSHGGHLTHGSPVNFSGRLFNVVFYGVEKETGRIDYEQVAALAREHKPSLIVAGASAYPRTIDFARFRAIADEVGAKLMVDMAHIAGLVAAGYHPSPVQHAHYTTTTTHKTLRGPRGGMILSTEDNGKTLNSQIFPGIQGGPLMHVIAAKAVAFGEALRPAFKEYQKQVVDNAAALAGVLTAAGFDLVSGGTDNHLMLVDLTSKDVTGKDAEIALDKAGITVNKNTVPFETRSPFVTSGVRLGTPALTTRGMKAAEMEKVGGWIVDAIANTTNETRLAEISREVERFARQFPLFAW.

Residues leucine 117 and 121-123 each bind (6S)-5,6,7,8-tetrahydrofolate; that span reads GHL. N6-(pyridoxal phosphate)lysine is present on lysine 226. Residue 349-351 coordinates (6S)-5,6,7,8-tetrahydrofolate; the sequence is SPF.

Belongs to the SHMT family. In terms of assembly, homodimer. Requires pyridoxal 5'-phosphate as cofactor.

The protein localises to the cytoplasm. The enzyme catalyses (6R)-5,10-methylene-5,6,7,8-tetrahydrofolate + glycine + H2O = (6S)-5,6,7,8-tetrahydrofolate + L-serine. The protein operates within one-carbon metabolism; tetrahydrofolate interconversion. It participates in amino-acid biosynthesis; glycine biosynthesis; glycine from L-serine: step 1/1. Its function is as follows. Catalyzes the reversible interconversion of serine and glycine with tetrahydrofolate (THF) serving as the one-carbon carrier. This reaction serves as the major source of one-carbon groups required for the biosynthesis of purines, thymidylate, methionine, and other important biomolecules. Also exhibits THF-independent aldolase activity toward beta-hydroxyamino acids, producing glycine and aldehydes, via a retro-aldol mechanism. The protein is Serine hydroxymethyltransferase of Nitratidesulfovibrio vulgaris (strain ATCC 29579 / DSM 644 / CCUG 34227 / NCIMB 8303 / VKM B-1760 / Hildenborough) (Desulfovibrio vulgaris).